The following is a 181-amino-acid chain: NADH-quinone oxidoreductase subunit B (181 aa).

[4Fe-4S] cluster contacts are provided by Cys-45, Cys-46, Cys-111, and Cys-140.

The protein belongs to the complex I 20 kDa subunit family. NDH-1 is composed of 15 different subunits. Subunits NuoB, C, D, E, F, and G constitute the peripheral sector of the complex. The cofactor is [4Fe-4S] cluster.

The protein localises to the cell membrane. The catalysed reaction is a quinone + NADH + 5 H(+)(in) = a quinol + NAD(+) + 4 H(+)(out). Its function is as follows. NDH-1 shuttles electrons from NADH, via FMN and iron-sulfur (Fe-S) centers, to quinones in the respiratory chain. The immediate electron acceptor for the enzyme in this species is believed to be a menaquinone. Couples the redox reaction to proton translocation (for every two electrons transferred, four hydrogen ions are translocated across the cytoplasmic membrane), and thus conserves the redox energy in a proton gradient. This is NADH-quinone oxidoreductase subunit B from Deinococcus radiodurans (strain ATCC 13939 / DSM 20539 / JCM 16871 / CCUG 27074 / LMG 4051 / NBRC 15346 / NCIMB 9279 / VKM B-1422 / R1).